The following is a 122-amino-acid chain: Large ribosomal subunit protein uL14 (122 aa).

Belongs to the universal ribosomal protein uL14 family. In terms of assembly, part of the 50S ribosomal subunit. Forms a cluster with proteins L3 and L19. In the 70S ribosome, L14 and L19 interact and together make contacts with the 16S rRNA in bridges B5 and B8.

Its function is as follows. Binds to 23S rRNA. Forms part of two intersubunit bridges in the 70S ribosome. The sequence is that of Large ribosomal subunit protein uL14 from Variovorax paradoxus (strain S110).